We begin with the raw amino-acid sequence, 501 residues long: Raftlin-2 (501 aa).

2 disordered regions span residues 1–20 and 196–238; these read MGCG…GKIF and SWNE…SRKG. The N-myristoyl glycine moiety is linked to residue Gly2. Cys3 carries S-palmitoyl cysteine lipidation. Residues 224–233 are compositionally biased toward polar residues; that stretch reads MEQNGSPSSS. Ser405 carries the phosphoserine modification. A disordered region spans residues 407–454; that stretch reads AQTTDKKASRRIKGEDKNKATSRSIGLDTTTPQPAESRHPPEECRLSP. Thr409 carries the phosphothreonine modification. Residues 410–425 are compositionally biased toward basic and acidic residues; sequence TDKKASRRIKGEDKNK. Residues 427–440 show a composition bias toward polar residues; it reads TSRSIGLDTTTPQP. Ser430 is subject to Phosphoserine. Residues 442 to 451 are compositionally biased toward basic and acidic residues; sequence ESRHPPEECR.

Belongs to the raftlin family.

Its subcellular location is the cell membrane. Its function is as follows. Upon bacterial lipopolysaccharide stimulation, mediates clathrin-dependent internalization of TLR4 in dendritic cells, resulting in activation of TICAM1-mediated signaling and subsequent IFNB1 production. May regulate B-cell antigen receptor mediated-signaling. The chain is Raftlin-2 (RFTN2) from Pongo abelii (Sumatran orangutan).